The primary structure comprises 101 residues: NAD(P)H-quinone oxidoreductase subunit 4L, chloroplastic (101 aa).

3 helical membrane-spanning segments follow: residues 2–22, 32–52, and 61–81; these read MLEH…YGLI, MCLE…SDFF, and IFSI…PAIV.

It belongs to the complex I subunit 4L family. In terms of assembly, NDH is composed of at least 16 different subunits, 5 of which are encoded in the nucleus.

The protein resides in the plastid. The protein localises to the chloroplast thylakoid membrane. It carries out the reaction a plastoquinone + NADH + (n+1) H(+)(in) = a plastoquinol + NAD(+) + n H(+)(out). It catalyses the reaction a plastoquinone + NADPH + (n+1) H(+)(in) = a plastoquinol + NADP(+) + n H(+)(out). In terms of biological role, NDH shuttles electrons from NAD(P)H:plastoquinone, via FMN and iron-sulfur (Fe-S) centers, to quinones in the photosynthetic chain and possibly in a chloroplast respiratory chain. The immediate electron acceptor for the enzyme in this species is believed to be plastoquinone. Couples the redox reaction to proton translocation, and thus conserves the redox energy in a proton gradient. This Fagopyrum esculentum subsp. ancestrale (Wild buckwheat) protein is NAD(P)H-quinone oxidoreductase subunit 4L, chloroplastic.